A 297-amino-acid polypeptide reads, in one-letter code: Protein phosphatase PTC7 homolog (297 aa).

The transit peptide at 1–27 (MFSVLSCGRLVARAVFGGLSQTDSRDY) directs the protein to the mitochondrion. One can recognise a PPM-type phosphatase domain in the interval 28-292 (SLVTASCGFG…DDITVLLSIV (265 aa)). Positions 71, 72, and 216 each coordinate Mn(2+).

Belongs to the PP2C family. It depends on Mg(2+) as a cofactor. Mn(2+) is required as a cofactor.

The protein localises to the mitochondrion matrix. It catalyses the reaction O-phospho-L-seryl-[protein] + H2O = L-seryl-[protein] + phosphate. It carries out the reaction O-phospho-L-threonyl-[protein] + H2O = L-threonyl-[protein] + phosphate. Its function is as follows. Protein phosphatase which positively regulates biosynthesis of the ubiquinone, coenzyme Q. Dephosphorylates the ubiquinone biosynthesis protein coq7 which is likely to lead to its activation. The polypeptide is Protein phosphatase PTC7 homolog (pptc7) (Xenopus laevis (African clawed frog)).